Reading from the N-terminus, the 108-residue chain is Glutaredoxin-1 (108 aa).

One can recognise a Glutaredoxin domain in the interval 3 to 106 (EEFVQQRLAN…DILSSIGVLR (104 aa)). A disulfide bond links C23 and C26.

It belongs to the glutaredoxin family.

It is found in the virion. Functionally, has thioltransferase and dehydroascorbate reductase activities. This chain is Glutaredoxin-1 (OPG075), found in Cowpox virus (strain GRI-90 / Grishak) (CPV).